A 202-amino-acid polypeptide reads, in one-letter code: Large ribosomal subunit protein uL18 (202 aa).

It belongs to the universal ribosomal protein uL18 family. In terms of assembly, part of the 50S ribosomal subunit. Contacts the 5S and 23S rRNAs.

This is one of the proteins that bind and probably mediate the attachment of the 5S RNA into the large ribosomal subunit, where it forms part of the central protuberance. This chain is Large ribosomal subunit protein uL18, found in Staphylothermus marinus (strain ATCC 43588 / DSM 3639 / JCM 9404 / F1).